The sequence spans 491 residues: MKYQAKNTALSQATDCIVLGVYENNKFSKSFNEIDQLTQGYLNDLVKSGELTGKLAQTVLLRDLQGLSAKRLLIVGCGKKGELTERQYKQIIQAVLKTLKETNTREVISYLTEIELKDRDLYWNIRFAIETIEHTNYQFDHFKSQKAETSVLESFIFNTDCAQAQQAISHANAISSGIKAARDIANMPPNICNPAYLAEQAKNLAENSTALSLKVVDEEEMAKLGMNAYLAVSKGSENRAYMSVLTFNNAPDKNAKPIVLVGKGLTFDAGGISLKPAADMDEMKYDMCGAASVFGTMKTIAQLNLPLNVIGVLAGCENLPDGNAYRPGDILTTMNGLTVEVLNTDAEGRLVLCDTLTYVERFEPELVIDVATLTGACVVALGQHNSGLVSTDNNLANALLQAATETTDKAWRLPLSEEYQEQLKSPFADLANIGGRWGGAITAGAFLSNFTKKYRWAHLDIAGTAWLQGANKGATGRPVSLLTQFLINQVK.

Positions 263 and 268 each coordinate Mn(2+). Lys275 is an active-site residue. Asp286, Asp345, and Glu347 together coordinate Mn(2+). Arg349 is an active-site residue.

It belongs to the peptidase M17 family. The cofactor is Mn(2+).

Its subcellular location is the cytoplasm. It carries out the reaction Release of an N-terminal amino acid, Xaa-|-Yaa-, in which Xaa is preferably Leu, but may be other amino acids including Pro although not Arg or Lys, and Yaa may be Pro. Amino acid amides and methyl esters are also readily hydrolyzed, but rates on arylamides are exceedingly low.. The catalysed reaction is Release of an N-terminal amino acid, preferentially leucine, but not glutamic or aspartic acids.. In terms of biological role, presumably involved in the processing and regular turnover of intracellular proteins. Catalyzes the removal of unsubstituted N-terminal amino acids from various peptides. The polypeptide is Cytosol aminopeptidase (pepA) (Haemophilus influenzae (strain ATCC 51907 / DSM 11121 / KW20 / Rd)).